A 456-amino-acid chain; its full sequence is Armadillo repeat-containing X-linked protein 1 (456 aa).

Residues 1-6 (MGRTRE) are Mitochondrial intermembrane-facing. Mitochondrion outer membrane (MOM)-targeting sequence regions lie at residues 1 to 6 (MGRTRE) and 26 to 36 (RLTWGKDENEK). The chain crosses the membrane as a helical; Signal-anchor span at residues 7–29 (AGCVAAGMVIGAGACYCVYRLTW). Residues 30 to 456 (GKDENEKLWD…VKVLKVLTKL (427 aa)) are Cytoplasmic-facing. 2 disordered regions span residues 37–106 (LWDE…SGGG) and 139–186 (RTLT…APAT). The span at 38 to 50 (WDEEEEEEEEEEE) shows a compositional bias: acidic residues. Composition is skewed to basic and acidic residues over residues 51-62 (KSCSDKTEKELK) and 72-81 (KPQDDSKSKV). Over residues 162-180 (SRARNRTSGKVKRKNRSKS) the composition is skewed to basic residues. ARM repeat units follow at residues 198–238 (PYKI…NNAA), 240–279 (SFNQ…NLSV), 361–401 (PAMT…NIND), and 418–456 (SSLF…LTKL).

This sequence belongs to the eutherian X-chromosome-specific Armcx family. As to quaternary structure, interacts with MIRO1. As to expression, widely expressed in the adult nervous tissue, especially in the forebrain, including the cerebral cortex, hippocampus and thalamus.

The protein localises to the mitochondrion. The protein resides in the mitochondrion outer membrane. Regulates mitochondrial transport during axon regeneration. Increases the proportion of motile mitochondria by recruiting stationary mitochondria into the motile pool. Enhances mitochondria movement and neurite growth in both adult axons and embryonic neurons. Promotes neuronal survival and axon regeneration after nerve injury. May link mitochondria to the Trak1-kinesin motor complex via its interaction with Miro1. The protein is Armadillo repeat-containing X-linked protein 1 (Armcx1) of Mus musculus (Mouse).